We begin with the raw amino-acid sequence, 438 residues long: Exosome complex component RRP45B (438 aa).

Disordered regions lie at residues Pro293–Glu322 and Ser334–Ser438. 2 stretches are compositionally biased toward basic and acidic residues: residues Val307–Glu322 and Ser334–Ala347. Residues Thr380–Ala394 show a composition bias toward polar residues. Over residues Leu410–Lys429 the composition is skewed to basic and acidic residues.

This sequence belongs to the RNase PH family.

The protein resides in the cytoplasm. It is found in the nucleus. Its function is as follows. Probable 3'-&gt;5' exoribonuclease involved in the regulation of cuticular wax biosynthesis by controlling the expression of CER3. May act by degrading a specific mRNA species encoding a negative regulator of CER3 transcription. Can perform exosomal functions and complement the yeast rrp45 null mutant. This chain is Exosome complex component RRP45B, found in Arabidopsis thaliana (Mouse-ear cress).